We begin with the raw amino-acid sequence, 839 residues long: MRPRATTICSLFFLLRVLAEPAKNSDFYLPGDYLLGGLFTLHANMKGIVHLDYLQVPMCKEYETKVIGYNLMQAMRFAVEEINNDSSLLPDVLLGYEMVDVCYVSNNVQPVLYFLAQEDDLLPIQENYSNYVPRVVAVIGPDNSDAVMTVANFLSLFLLPQITYSAISDELRDKVRFPALLRTAPSADHHIEAMVQLMLHFRWNWIIVLVSGDTYGRDNGQLLGDRLARGDICIAFQETLPTVQPNQNMTSEERQRLVTIVDKLQQSTARVVVVFSPDLTLYNFFNEVLRQNFTGAVWIASESWAIDPVLHNLTELRHMGTFLGITIQSVPIPGFSEFRVRDPQAGPPPLSRTSQRSTCNQECDSCLNGTLSFNNVLRLSGERVVYSVYSAVYAVAHALHSLLGCDHGTCTKREVYPWQLLKEIWKVNFTLLDHEISFDPQGDMALHLEIVQWQWGLSQNPFQSVASYYPLQRQLKKIQDISWHTINNTIPVSMCSKRCQSGQKKKPVGIHICCFECIDCLPGTFLNQTEDEFECQACPSNEWSHQSEASCFKRRLAFLEWHEAPTIVVALLAALGFLSTLAILVIFWRHFQTPMVRSAGGPMCFLMLTLLLVAYMVVPVYVGPPKVSTCFCRQALFPLCFTICISCIAVRSFQIVCVFKMASRFPRAYSYWVRYQGPYVSMAFITVLKMVTVVIGMLATGLNPTTRIDPDDPKIMIVSCNPNYRNSLFFNTGLDLLLSVVGFSFAYMGKELPTNYNEAKFITLSMTFYFTSSVSLCTFMSAYNGVLVTIMDLLVTVLNLLAISLGYFGPKCYMILFYPERNTPAYFNSMIQGYTMRRD.

The first 19 residues, 1 to 19 (MRPRATTICSLFFLLRVLA), serve as a signal peptide directing secretion. Topologically, residues 20–566 (EPAKNSDFYL…AFLEWHEAPT (547 aa)) are extracellular. Asn84, Asn127, Asn248, Asn292, Asn312, Asn368, Asn428, Asn487, and Asn527 each carry an N-linked (GlcNAc...) asparagine glycan. The helical transmembrane segment at 567-587 (IVVALLAALGFLSTLAILVIF) threads the bilayer. The Cytoplasmic portion of the chain corresponds to 588–602 (WRHFQTPMVRSAGGP). Residues 603-623 (MCFLMLTLLLVAYMVVPVYVG) traverse the membrane as a helical segment. Over 624 to 635 (PPKVSTCFCRQA) the chain is Extracellular. A helical membrane pass occupies residues 636–656 (LFPLCFTICISCIAVRSFQIV). At 657–681 (CVFKMASRFPRAYSYWVRYQGPYVS) the chain is on the cytoplasmic side. A helical membrane pass occupies residues 682–702 (MAFITVLKMVTVVIGMLATGL). Over 703-727 (NPTTRIDPDDPKIMIVSCNPNYRNS) the chain is Extracellular. The helical transmembrane segment at 728–748 (LFFNTGLDLLLSVVGFSFAYM) threads the bilayer. The Cytoplasmic segment spans residues 749 to 760 (GKELPTNYNEAK). A helical transmembrane segment spans residues 761 to 781 (FITLSMTFYFTSSVSLCTFMS). The Extracellular segment spans residues 782–784 (AYN). The helical transmembrane segment at 785–805 (GVLVTIMDLLVTVLNLLAISL) threads the bilayer. The Cytoplasmic segment spans residues 806–839 (GYFGPKCYMILFYPERNTPAYFNSMIQGYTMRRD).

This sequence belongs to the G-protein coupled receptor 3 family. TAS1R subfamily. In terms of assembly, forms heterodimers with TAS1R3.

It localises to the cell membrane. Its function is as follows. Putative taste receptor. TAS1R2/TAS1R3 recognizes diverse natural and synthetic sweeteners. The chain is Taste receptor type 1 member 2 (TAS1R2) from Macaca mulatta (Rhesus macaque).